The sequence spans 379 residues: Anhydro-N-acetylmuramic acid kinase (379 aa).

9 to 16 (GTSADGVD) is a binding site for ATP.

The protein belongs to the anhydro-N-acetylmuramic acid kinase family.

It catalyses the reaction 1,6-anhydro-N-acetyl-beta-muramate + ATP + H2O = N-acetyl-D-muramate 6-phosphate + ADP + H(+). It functions in the pathway amino-sugar metabolism; 1,6-anhydro-N-acetylmuramate degradation. Its pathway is cell wall biogenesis; peptidoglycan recycling. Catalyzes the specific phosphorylation of 1,6-anhydro-N-acetylmuramic acid (anhMurNAc) with the simultaneous cleavage of the 1,6-anhydro ring, generating MurNAc-6-P. Is required for the utilization of anhMurNAc either imported from the medium or derived from its own cell wall murein, and thus plays a role in cell wall recycling. In Prochlorococcus marinus (strain MIT 9303), this protein is Anhydro-N-acetylmuramic acid kinase.